The sequence spans 357 residues: Chorismate synthase (357 aa).

The segment covering 38-49 (EKDIQPDLDRRK) has biased composition (basic and acidic residues). The interval 38–60 (EKDIQPDLDRRKPGTSRYTTPRR) is disordered. NADP(+)-binding residues include Arg48 and Arg54. FMN contacts are provided by residues 125–127 (RSS), 243–244 (NA), Gly283, 298–302 (KPTSS), and Arg324.

Belongs to the chorismate synthase family. In terms of assembly, homotetramer. It depends on FMNH2 as a cofactor.

It carries out the reaction 5-O-(1-carboxyvinyl)-3-phosphoshikimate = chorismate + phosphate. It participates in metabolic intermediate biosynthesis; chorismate biosynthesis; chorismate from D-erythrose 4-phosphate and phosphoenolpyruvate: step 7/7. Functionally, catalyzes the anti-1,4-elimination of the C-3 phosphate and the C-6 proR hydrogen from 5-enolpyruvylshikimate-3-phosphate (EPSP) to yield chorismate, which is the branch point compound that serves as the starting substrate for the three terminal pathways of aromatic amino acid biosynthesis. This reaction introduces a second double bond into the aromatic ring system. In Haemophilus influenzae (strain PittGG), this protein is Chorismate synthase.